We begin with the raw amino-acid sequence, 90 residues long: Conotoxin Ca8.2 (90 aa).

The first 21 residues, 1–21 (MMLKMGAMFVLLLLFILPSSQ), serve as a signal peptide directing secretion. A propeptide spanning residues 22–46 (QEGDVQARKTHLKRGFYGTLAMSTR) is cleaved from the precursor. Residue Q89 is modified to Glutamine amide.

This sequence belongs to the conotoxin S superfamily. Post-translationally, contains 5 disulfide bonds. As to expression, expressed by the venom duct.

The protein resides in the secreted. This chain is Conotoxin Ca8.2, found in Conus caracteristicus (Characteristic cone).